The chain runs to 512 residues: Gamma-aminobutyric acid receptor subunit beta-2 (512 aa).

Residues 1 to 25 (MWRVRKRGYFGIWSFPLIIAAVCAQ) form the signal peptide. Topologically, residues 26–244 (SVNDPSNMSL…SFKLKRNIGY (219 aa)) are extracellular. Asn-32 and Asn-104 each carry an N-linked (GlcNAc...) asparagine glycan. Tyr-121 is a binding site for histamine. The cysteines at positions 160 and 174 are disulfide-linked. The N-linked (GlcNAc...) asparagine glycan is linked to Asn-173. Histamine contacts are provided by residues 180-181 (SY) and Thr-226. The 4-aminobutanoate site is built by Tyr-181 and Thr-226. A run of 3 helical transmembrane segments spans residues 245–266 (FILQ…SFWI), 270–292 (ASAA…NTHL), and 304–326 (AIDM…YALV). The Cytoplasmic segment spans residues 327–489 (NYIFFGRGPQ…DLTDVNAIDR (163 aa)). Residue Tyr-441 is modified to Phosphotyrosine. The helical transmembrane segment at 490–511 (WSRIFFPVVFSFFNIVYWLYYV) threads the bilayer.

It belongs to the ligand-gated ion channel (TC 1.A.9) family. Gamma-aminobutyric acid receptor (TC 1.A.9.5) subfamily. GABRB2 sub-subfamily. Heteropentamer, formed by a combination of alpha (GABRA1-6), beta (GABRB1-3), gamma (GABRG1-3), delta (GABRD), epsilon (GABRE), rho (GABRR1-3), pi (GABRP) and theta (GABRQ) chains, each subunit exhibiting distinct physiological and pharmacological properties. Interacts with UBQLN1. May interact with KIF21B. Identified in a complex of 720 kDa composed of LHFPL4, NLGN2, GABRA1, GABRB2, GABRG2 and GABRB3. Glycosylated.

The protein localises to the postsynaptic cell membrane. Its subcellular location is the cell membrane. It is found in the cytoplasmic vesicle. It carries out the reaction chloride(in) = chloride(out). Allosterically activated by benzodiazepines and the anesthetic etomidate. Inhibited by the antagonist bicuculline. Potentiated by histamine. Its function is as follows. Beta subunit of the heteropentameric ligand-gated chloride channel gated by gamma-aminobutyric acid (GABA), a major inhibitory neurotransmitter in the brain. GABA-gated chloride channels, also named GABA(A) receptors (GABAAR), consist of five subunits arranged around a central pore and contain GABA active binding site(s) located at the alpha and beta subunit interface(s). When activated by GABA, GABAARs selectively allow the flow of chloride anions across the cell membrane down their electrochemical gradient. Chloride influx into the postsynaptic neuron following GABAAR opening decreases the neuron ability to generate a new action potential, thereby reducing nerve transmission. GABAARs containing alpha-1 and beta-2 or -3 subunits exhibit synaptogenic activity; the gamma-2 subunit being necessary but not sufficient to induce rapid synaptic contacts formation. Extrasynaptic beta-2 receptors contribute to the tonic GABAergic inhibition. Beta-containing GABAARs can simultaneously bind GABA and histamine where histamine binds at the interface of two neighboring beta subunits, which may be involved in the regulation of sleep and wakefulness. This chain is Gamma-aminobutyric acid receptor subunit beta-2, found in Mus musculus (Mouse).